We begin with the raw amino-acid sequence, 272 residues long: Proteasome subunit beta (272 aa).

Positions 1–47 are cleaved as a propeptide — removed in mature form; by autocatalysis; the sequence is MSTGGDRLPEAFLRPGSSSFVEFLREVAPQSHPEHARPAGAGDVVHA. Catalysis depends on Thr48, which acts as the Nucleophile.

It belongs to the peptidase T1B family. In terms of assembly, the 20S proteasome core is composed of 14 alpha and 14 beta subunits that assemble into four stacked heptameric rings, resulting in a barrel-shaped structure. The two inner rings, each composed of seven catalytic beta subunits, are sandwiched by two outer rings, each composed of seven alpha subunits. The catalytic chamber with the active sites is on the inside of the barrel. Has a gated structure, the ends of the cylinder being occluded by the N-termini of the alpha-subunits. Is capped by the proteasome-associated ATPase, ARC.

The protein resides in the cytoplasm. The catalysed reaction is Cleavage of peptide bonds with very broad specificity.. It functions in the pathway protein degradation; proteasomal Pup-dependent pathway. The formation of the proteasomal ATPase ARC-20S proteasome complex, likely via the docking of the C-termini of ARC into the intersubunit pockets in the alpha-rings, may trigger opening of the gate for substrate entry. Interconversion between the open-gate and close-gate conformations leads to a dynamic regulation of the 20S proteasome proteolysis activity. In terms of biological role, component of the proteasome core, a large protease complex with broad specificity involved in protein degradation. This Beutenbergia cavernae (strain ATCC BAA-8 / DSM 12333 / CCUG 43141 / JCM 11478 / NBRC 16432 / NCIMB 13614 / HKI 0122) protein is Proteasome subunit beta.